We begin with the raw amino-acid sequence, 295 residues long: Pyridoxal 5'-phosphate synthase subunit PdxS (295 aa).

D-ribose 5-phosphate is bound at residue Asp-25. The active-site Schiff-base intermediate with D-ribose 5-phosphate is Lys-82. Gly-154 is a binding site for D-ribose 5-phosphate. Position 166 (Arg-166) interacts with D-glyceraldehyde 3-phosphate. D-ribose 5-phosphate-binding positions include Gly-215 and 236 to 237 (GS).

The protein belongs to the PdxS/SNZ family. In terms of assembly, in the presence of PdxT, forms a dodecamer of heterodimers.

The enzyme catalyses aldehydo-D-ribose 5-phosphate + D-glyceraldehyde 3-phosphate + L-glutamine = pyridoxal 5'-phosphate + L-glutamate + phosphate + 3 H2O + H(+). It participates in cofactor biosynthesis; pyridoxal 5'-phosphate biosynthesis. Functionally, catalyzes the formation of pyridoxal 5'-phosphate from ribose 5-phosphate (RBP), glyceraldehyde 3-phosphate (G3P) and ammonia. The ammonia is provided by the PdxT subunit. Can also use ribulose 5-phosphate and dihydroxyacetone phosphate as substrates, resulting from enzyme-catalyzed isomerization of RBP and G3P, respectively. This Staphylococcus saprophyticus subsp. saprophyticus (strain ATCC 15305 / DSM 20229 / NCIMB 8711 / NCTC 7292 / S-41) protein is Pyridoxal 5'-phosphate synthase subunit PdxS.